The chain runs to 728 residues: Catalase-peroxidase 1 (728 aa).

Positions Met-1–Gly-16 are cleaved as a signal peptide. Residues Trp-97 to Tyr-225 constitute a cross-link (tryptophyl-tyrosyl-methioninium (Trp-Tyr) (with M-251)). His-98 functions as the Proton acceptor in the catalytic mechanism. Positions Tyr-225–Met-251 form a cross-link, tryptophyl-tyrosyl-methioninium (Tyr-Met) (with W-97). Residue His-266 coordinates heme b.

This sequence belongs to the peroxidase family. Peroxidase/catalase subfamily. In terms of assembly, homodimer or homotetramer. Heme b is required as a cofactor. Post-translationally, formation of the three residue Trp-Tyr-Met cross-link is important for the catalase, but not the peroxidase activity of the enzyme.

The enzyme catalyses H2O2 + AH2 = A + 2 H2O. The catalysed reaction is 2 H2O2 = O2 + 2 H2O. Bifunctional enzyme with both catalase and broad-spectrum peroxidase activity. The chain is Catalase-peroxidase 1 from Shewanella frigidimarina (strain NCIMB 400).